The chain runs to 413 residues: Arginine biosynthesis bifunctional protein ArgJ (413 aa).

Substrate contacts are provided by T158, K184, T195, E285, N408, and S413. T195 (nucleophile) is an active-site residue.

Belongs to the ArgJ family. As to quaternary structure, heterotetramer of two alpha and two beta chains.

It is found in the cytoplasm. It carries out the reaction N(2)-acetyl-L-ornithine + L-glutamate = N-acetyl-L-glutamate + L-ornithine. The catalysed reaction is L-glutamate + acetyl-CoA = N-acetyl-L-glutamate + CoA + H(+). Its pathway is amino-acid biosynthesis; L-arginine biosynthesis; L-ornithine and N-acetyl-L-glutamate from L-glutamate and N(2)-acetyl-L-ornithine (cyclic): step 1/1. The protein operates within amino-acid biosynthesis; L-arginine biosynthesis; N(2)-acetyl-L-ornithine from L-glutamate: step 1/4. Catalyzes two activities which are involved in the cyclic version of arginine biosynthesis: the synthesis of N-acetylglutamate from glutamate and acetyl-CoA as the acetyl donor, and of ornithine by transacetylation between N(2)-acetylornithine and glutamate. This is Arginine biosynthesis bifunctional protein ArgJ from Brucella melitensis biotype 1 (strain ATCC 23456 / CCUG 17765 / NCTC 10094 / 16M).